Here is a 408-residue protein sequence, read N- to C-terminus: Sprouty-related, EVH1 domain-containing protein 3 (408 aa).

A WH1 domain is found at M1–L113. The interval L118–P226 is disordered. A compositionally biased stretch (low complexity) spans P120–S130. In terms of domain architecture, KBD spans L192–T242. R238 carries the asymmetric dimethylarginine modification. R246 carries the omega-N-methylarginine modification. The tract at residues L256–S286 is disordered. A compositionally biased stretch (pro residues) spans P265–A281. The region spanning R294–E405 is the SPR domain.

As to quaternary structure, interacts with palmitoyltransferase ZDHHC17/HIP14; the interaction leads to palmitoylation of SPRED3. Phosphorylated on tyrosine. Post-translationally, palmitoylated by ZDHHC17/HIP14. In terms of processing, ubiquitinated. Brain specific.

Its subcellular location is the cell membrane. In terms of biological role, tyrosine kinase substrate that inhibits growth-factor-mediated activation of MAP kinase. Inhibits fibroblast growth factor (FGF)-induced retinal lens fiber differentiation, probably by inhibiting FGF-mediated phosphorylation of ERK1/2. Inhibits TGFB-induced epithelial-to-mesenchymal transition in lens epithelial cells. The sequence is that of Sprouty-related, EVH1 domain-containing protein 3 (Spred3) from Mus musculus (Mouse).